A 427-amino-acid chain; its full sequence is Large ribosomal subunit protein uL4 (427 aa).

The residue at position 2 (alanine 2) is an N-acetylalanine. An N6-acetyllysine modification is found at lysine 14. Arginine 97 is modified (omega-N-methylarginine). Residue lysine 106 is modified to N6-acetyllysine. Lysine 239 participates in a covalent cross-link: Glycyl lysine isopeptide (Lys-Gly) (interchain with G-Cter in SUMO2). At lysine 259 the chain carries N6-acetyllysine. Threonine 266 carries the phosphothreonine modification. A phosphoserine mark is found at serine 290 and serine 295. Arginine 300 carries the citrulline modification. Residue lysine 327 forms a Glycyl lysine isopeptide (Lys-Gly) (interchain with G-Cter in SUMO2) linkage. Residues lysine 333 and lysine 353 each carry the N6-acetyllysine modification. N6-acetyllysine; alternate is present on lysine 364. Lysine 364 is covalently cross-linked (Glycyl lysine isopeptide (Lys-Gly) (interchain with G-Cter in SUMO1); alternate). Serine 365 is subject to Phosphoserine. The interval 369 to 427 (AAVAGKKPVVGKKGKKVAVGVKKQKKPLVGKKAAATKKPAPEKKSTEKKPTTEEKKPAA) is disordered. The span at 377–397 (VVGKKGKKVAVGVKKQKKPLV) shows a compositional bias: basic residues. Over residues 407-427 (PAPEKKSTEKKPTTEEKKPAA) the composition is skewed to basic and acidic residues.

The protein belongs to the universal ribosomal protein uL4 family. As to quaternary structure, component of the large ribosomal subunit. May bind IPO9 with low affinity. Interacts with RBM3. Citrullinated by PADI4.

It is found in the cytoplasm. Its function is as follows. Component of the large ribosomal subunit. The ribosome is a large ribonucleoprotein complex responsible for the synthesis of proteins in the cell. This is Large ribosomal subunit protein uL4 (RPL4) from Macaca fascicularis (Crab-eating macaque).